The chain runs to 470 residues: tRNA modification GTPase MnmE (470 aa).

(6S)-5-formyl-5,6,7,8-tetrahydrofolate contacts are provided by Arg30, Glu92, and Arg132. One can recognise a TrmE-type G domain in the interval 227-393; it reads GLQVALVGRP…LIKAVLKTCG (167 aa). Asn237 serves as a coordination point for K(+). Residues 237 to 242, 256 to 262, 281 to 284, and 342 to 345 contribute to the GTP site; these read NVGKSS, TDLPGTT, DTAG, and NKAD. A Mg(2+)-binding site is contributed by Ser241. Positions 256, 258, and 261 each coordinate K(+). Thr262 lines the Mg(2+) pocket. Lys470 is a binding site for (6S)-5-formyl-5,6,7,8-tetrahydrofolate.

The protein belongs to the TRAFAC class TrmE-Era-EngA-EngB-Septin-like GTPase superfamily. TrmE GTPase family. In terms of assembly, homodimer. Heterotetramer of two MnmE and two MnmG subunits. K(+) is required as a cofactor.

The protein resides in the cytoplasm. In terms of biological role, exhibits a very high intrinsic GTPase hydrolysis rate. Involved in the addition of a carboxymethylaminomethyl (cmnm) group at the wobble position (U34) of certain tRNAs, forming tRNA-cmnm(5)s(2)U34. The sequence is that of tRNA modification GTPase MnmE from Prochlorococcus marinus (strain MIT 9313).